Consider the following 213-residue polypeptide: Negative modulator of initiation of replication (213 aa).

Interaction with DNA stretches follow at residues Ala-116–Val-117, Arg-145–Tyr-149, and Asn-179–Lys-185.

This sequence belongs to the SeqA family. Homodimer. Polymerizes to form helical filaments.

The protein resides in the cytoplasm. Negative regulator of replication initiation, which contributes to regulation of DNA replication and ensures that replication initiation occurs exactly once per chromosome per cell cycle. Binds to pairs of hemimethylated GATC sequences in the oriC region, thus preventing assembly of replication proteins and re-initiation at newly replicated origins. Repression is relieved when the region becomes fully methylated. This chain is Negative modulator of initiation of replication, found in Haemophilus parainfluenzae (strain T3T1).